Reading from the N-terminus, the 51-residue chain is uncharacterized protein (51 aa).

This is an uncharacterized protein from Grapevine leafroll-associated virus 3 (isolate United States/NY1) (GLRaV-3).